A 432-amino-acid polypeptide reads, in one-letter code: Adenylosuccinate synthetase (432 aa).

GTP-binding positions include 13 to 19 (GDEGKGK) and 41 to 43 (GHT). Catalysis depends on Asp14, which acts as the Proton acceptor. Positions 14 and 41 each coordinate Mg(2+). IMP contacts are provided by residues 14–17 (DEGK), 39–42 (NAGH), Thr130, Arg144, Gln225, Thr240, and Arg304. The active-site Proton donor is the His42. 300–306 (AVTGRPR) serves as a coordination point for substrate. Residues Arg306, 332-334 (KLD), and 415-417 (STG) contribute to the GTP site.

Belongs to the adenylosuccinate synthetase family. In terms of assembly, homodimer. Mg(2+) serves as cofactor.

The protein localises to the cytoplasm. The enzyme catalyses IMP + L-aspartate + GTP = N(6)-(1,2-dicarboxyethyl)-AMP + GDP + phosphate + 2 H(+). It participates in purine metabolism; AMP biosynthesis via de novo pathway; AMP from IMP: step 1/2. Plays an important role in the de novo pathway of purine nucleotide biosynthesis. Catalyzes the first committed step in the biosynthesis of AMP from IMP. The chain is Adenylosuccinate synthetase from Actinobacillus succinogenes (strain ATCC 55618 / DSM 22257 / CCUG 43843 / 130Z).